We begin with the raw amino-acid sequence, 161 residues long: 18.3 kDa class I heat shock protein (161 aa).

Positions 48-161 (ETAAFANARI…KPQVKAINVY (114 aa)) constitute a sHSP domain.

The protein belongs to the small heat shock protein (HSP20) family. In terms of assembly, forms oligomeric structures.

The protein localises to the cytoplasm. The sequence is that of 18.3 kDa class I heat shock protein (HSP18) from Oxybasis rubra (Red goosefoot).